The following is a 120-amino-acid chain: Large ribosomal subunit protein uL18 (120 aa).

The segment covering 1–10 (MSTPRKEQTQ) has biased composition (basic and acidic residues). The disordered stretch occupies residues 1–25 (MSTPRKEQTQKRHRRLRRHLEGTPE).

This sequence belongs to the universal ribosomal protein uL18 family. Part of the 50S ribosomal subunit; part of the 5S rRNA/L5/L18/L25 subcomplex. Contacts the 5S and 23S rRNAs.

This is one of the proteins that bind and probably mediate the attachment of the 5S RNA into the large ribosomal subunit, where it forms part of the central protuberance. This is Large ribosomal subunit protein uL18 from Synechococcus sp. (strain RCC307).